The chain runs to 60 residues: Large ribosomal subunit protein bL33 (60 aa).

It belongs to the bacterial ribosomal protein bL33 family.

The sequence is that of Large ribosomal subunit protein bL33 from Flavobacterium psychrophilum (strain ATCC 49511 / DSM 21280 / CIP 103535 / JIP02/86).